The primary structure comprises 540 residues: Chaperonin GroEL (540 aa).

Residues 29-32 (TIGP), 86-90 (DGTTT), glycine 413, 476-478 (NAA), and aspartate 492 each bind ATP. The disordered stretch occupies residues 520-540 (DKPEPESNNQMPATPGMGGMM).

The protein belongs to the chaperonin (HSP60) family. In terms of assembly, forms a cylinder of 14 subunits composed of two heptameric rings stacked back-to-back. Interacts with the co-chaperonin GroES.

The protein localises to the cytoplasm. The catalysed reaction is ATP + H2O + a folded polypeptide = ADP + phosphate + an unfolded polypeptide.. Functionally, together with its co-chaperonin GroES, plays an essential role in assisting protein folding. The GroEL-GroES system forms a nano-cage that allows encapsulation of the non-native substrate proteins and provides a physical environment optimized to promote and accelerate protein folding. The chain is Chaperonin GroEL from Ligilactobacillus salivarius (strain UCC118) (Lactobacillus salivarius).